Reading from the N-terminus, the 93-residue chain is Small ribosomal subunit protein uS17 (93 aa).

It belongs to the universal ribosomal protein uS17 family. In terms of assembly, part of the 30S ribosomal subunit.

In terms of biological role, one of the primary rRNA binding proteins, it binds specifically to the 5'-end of 16S ribosomal RNA. This chain is Small ribosomal subunit protein uS17, found in Bordetella bronchiseptica (strain ATCC BAA-588 / NCTC 13252 / RB50) (Alcaligenes bronchisepticus).